A 148-amino-acid polypeptide reads, in one-letter code: F420H(2)-dependent quinone reductase MT1609 (148 aa).

Residues 46 to 48 (AKT), 52 to 57 (RKTPLM), 68 to 71 (VASL), 79 to 83 (VWYHN), and Y125 contribute to the coenzyme F420-(gamma-Glu)n site.

The protein belongs to the F420H(2)-dependent quinone reductase family.

It is found in the cell membrane. The enzyme catalyses oxidized coenzyme F420-(gamma-L-Glu)(n) + a quinol + H(+) = reduced coenzyme F420-(gamma-L-Glu)(n) + a quinone. Functionally, involved in a F420-dependent anti-oxidant mechanism that protects M.tuberculosis against oxidative stress and bactericidal agents. Catalyzes the F420H(2)-dependent two-electron reduction of quinones to dihydroquinones, thereby preventing the formation of cytotoxic semiquinones obtained by the one-electron reduction pathway. In vitro, catalyzes the reduction of menadione to menadiol; since menaquinone is the sole quinone electron carrier in the respiratory chain in M.tuberculosis, the physiological electron acceptor for Fqr-mediated F420H(2) oxidation is therefore likely to be the endogenous menaquinone found in the membrane fraction of M.tuberculosis. In Mycobacterium tuberculosis (strain CDC 1551 / Oshkosh), this protein is F420H(2)-dependent quinone reductase MT1609.